The chain runs to 44 residues: Thymosin beta-4 (44 aa).

The tract at residues 1–44 (MSDKPDMGEIQKFNKSKLKKTETQEKNPLPSKETIEQEKQAGES) is disordered. Position 2 is an N-acetylserine (S2). S2 is modified (phosphoserine). K4 is subject to N6-acetyllysine. An N6-acetyllysine; alternate modification is found at K12. K12 is covalently cross-linked (Glycyl lysine isopeptide (Lys-Gly) (interchain with G-Cter in SUMO2); alternate). At T23 the chain carries Phosphothreonine. Position 26 is an N6-acetyllysine (K26). A Phosphoserine modification is found at S31. K32 is subject to N6-acetyllysine. Positions 33 to 44 (ETIEQEKQAGES) are enriched in basic and acidic residues. A Phosphothreonine modification is found at T34. K39 is modified (N6-acetyllysine).

It belongs to the thymosin beta family. As to quaternary structure, identified in a complex composed of ACTA1, COBL, GSN AND TMSB4X. Interacts with SERPINB1. AcSDKP is inactivated by ACE, which removes the dipeptide Lys-Pro from its C-terminus.

It localises to the cytoplasm. Its subcellular location is the cytoskeleton. Functionally, plays an important role in the organization of the cytoskeleton. Binds to and sequesters actin monomers (G actin) and therefore inhibits actin polymerization. In terms of biological role, potent inhibitor of bone marrow derived stem cell differentiation. Acts by inhibits the entry of hematopoietic pluripotent stem cells into the S-phase. This Notamacropus eugenii (Tammar wallaby) protein is Thymosin beta-4 (TMSB4).